A 456-amino-acid chain; its full sequence is MHRYKKEASSLIKLATPVLIASVAQTGMGFVDTVMAGGVSATDMAAVSVAASIWLPSILFGIGLLMALVPVVAQLNGAGKREQVPFEIQQGAVMALLISIPIIGVLFQTQWILGYMNVDAVMATKTIGYIHAVMFAVPAFLLFQTLRSLTDGLSLTKPAMVIGFIGLLLNIPLNWMFVYGKLGAPALGGVGCGVATAIVYWIMFLLLLLYVTTSQRLRQVQLFTTFHPPQLNAQVKLFKLGFPVAAALFFEVTLFAVVALLVAPLGSTVVAAHQVAINFSSLVFMLPMSIGAATSIRVGHMLGEKSTEGARIASHVGILVGLSTAVFTALLTVILREQIALLYTDNRVVITLAMQLLIFAAIYQCTDAIQVIAAGALRGYKDMRAIFNRTFIAYWLLGLPTGYVLGLTDWIVEPMGAQGFWIGFIVGLSSAAAMLGVRLHWLHRQNDEIQLNYEAR.

Transmembrane regions (helical) follow at residues 11–31 (LIKL…MGFV), 53–73 (IWLP…PVVA), 93–113 (VMAL…QWIL), 126–146 (TIGY…FQTL), 159–179 (AMVI…MFVY), 189–209 (GVGC…LLLL), 242–262 (FPVA…ALLV), 276–296 (AINF…ATSI), 315–335 (HVGI…TVIL), 356–376 (LLIF…AAGA), 391–411 (FIAY…TDWI), and 417–437 (AQGF…MLGV).

It belongs to the multi antimicrobial extrusion (MATE) (TC 2.A.66.1) family.

Its subcellular location is the cell inner membrane. Its function is as follows. Multidrug efflux pump that functions as a Na(+)/drug antiporter. The protein is Multidrug resistance protein NorM (norM) of Vibrio vulnificus (strain YJ016).